The chain runs to 582 residues: Ubiquilin-1 (582 aa).

2 disordered regions span residues 1-26 (MAES…AEPK) and 102-136 (RPQD…AANS). Ala-2 is subject to N-acetylalanine. A Ubiquitin-like domain is found at 28–102 (MKVTVKTPKE…VHLVIKTQNR (75 aa)). Residues 102–135 (RPQDNSAQQTNTTGNSVTSSPAPDSNPTSGPAAN) are compositionally biased toward polar residues. An interaction with UBXN4 region spans residues 169–422 (QLLSNPEMMV…LNNPLFAGNP (254 aa)). STI1 domains are found at residues 173 to 201 (NPEM…QLIM) and 203 to 242 (NPQM…MQEM). Positions 285–365 (NPFASLVSSP…NLVPGAGASM (81 aa)) are disordered. The span at 290 to 304 (LVSSPSSAEGTQPSR) shows a compositional bias: polar residues. Residues 318–346 (QTPQSSPASGSTGSTTNTVSTSAGNATST) are compositionally biased toward low complexity. 2 consecutive STI1 domains span residues 381 to 428 (NPQL…QEQM) and 432 to 464 (LPTF…QQGL). The disordered stretch occupies residues 481 to 513 (GLAAGNSGGPAGTTAPSTAPGEDTNPQGGAAEP). In terms of domain architecture, UBA spans 539-579 (RFQQQLEQLSAMGFLNREANLQALIATGGDINAAIERLLGS).

In terms of assembly, monomer and homodimer. Heterodimer with UBQLN2. Binds CD47. Binds NBL1. Binds GABRA1, GABRA2, GABRA3, GABRA6, GABRB1, GABRB2 and GABRB3. Binds UBE3A, BTRC, P4HB and MTOR. Interacts with the proteasome 19S subunit. Interacts (via ubiquitin-like domain) with TREX1; the interaction is direct and may control TREX1 subcellular location. Forms a complex with UBXN4 and VCP. Interacts (via UBA domain) with UBQLN4 (via ubiquitin-like domain). Found in a complex with UBQLN2 and MAP1LC3A/B/C. The monomeric form interacts with PSEN1 and PSEN2. Interacts with ORAI1. Interacts (via UBA domain) with TICAM1. Interacts with EPS15. Interacts (via UBA domain) with UBA52 and (via ubiquitin-like domain) with PSMD3 and PSMD4. Interacts with HERPUD1. Interacts with MAP1LC3A/B/C in the presence of UBQLN4. Interacts (via ubiquitin-like domain) with EPS15 (via UIM domains) and both the ubiquitinated and non-ubiquitinated forms can interact with EPS15. Interacts (via ubiquitin-like domain) with EPS15L1, HGS (via UIM domain) and STAM2 (via UIM domain). Interacts with BCL2L10/BCL-B; in the cytoplasm. In terms of processing, degraded during both macroautophagy and during chaperone-mediated autophagy (CMA). Phosphorylated. Post-translationally, ubiquitinated.

It is found in the nucleus. It localises to the cytoplasm. The protein localises to the endoplasmic reticulum. The protein resides in the cytoplasmic vesicle. Its subcellular location is the autophagosome. It is found in the cell membrane. Its function is as follows. Plays an important role in the regulation of different protein degradation mechanisms and pathways including ubiquitin-proteasome system (UPS), autophagy and endoplasmic reticulum-associated protein degradation (ERAD) pathway. Mediates the proteasomal targeting of misfolded or accumulated proteins for degradation by binding (via UBA domain) to their polyubiquitin chains and by interacting (via ubiquitin-like domain) with the subunits of the proteasome. Plays a role in the ERAD pathway via its interaction with ER-localized proteins UBXN4, VCP and HERPUD1 and may form a link between the polyubiquitinated ERAD substrates and the proteasome. Plays a role in unfolded protein response (UPR) by attenuating the induction of UPR-inducible genes, DDTI3/CHOP, HSPA5 and PDIA2 during ER stress. Involved in the regulation of macroautophagy and autophagosome formation; required for maturation of autophagy-related protein LC3 from the cytosolic form LC3-I to the membrane-bound form LC3-II and may assist in the maturation of autophagosomes to autolysosomes by mediating autophagosome-lysosome fusion. Negatively regulates the TICAM1/TRIF-dependent toll-like receptor signaling pathway by decreasing the abundance of TICAM1 via the autophagic pathway. Promotes the ubiquitination and lysosomal degradation of ORAI1, consequently down-regulating the ORAI1-mediated Ca2+ mobilization. Suppresses the maturation and proteasomal degradation of amyloid beta A4 protein (A4) by stimulating the lysine 63 (K63)-linked polyubiquitination. Delays the maturation of A4 by sequestering it in the Golgi apparatus and preventing its transport to the cell surface for subsequent processing. Promotes the surface expression of GABA-A receptors. Ubiquitinates BCL2L10 and thereby stabilizes protein abundance. This chain is Ubiquilin-1 (Ubqln1), found in Rattus norvegicus (Rat).